The following is a 329-amino-acid chain: Sex comb on midleg-like protein 1 (329 aa).

The interval 125-194 is disordered; sequence NEVHESFSYP…SDFSEHNYQP (70 aa). Position 138 is a phosphoserine (Ser-138). Residues 159–168 are compositionally biased toward basic and acidic residues; the sequence is FRMEEYQRAE. A Phosphoserine modification is found at Ser-238. The SAM domain occupies 258-325; sequence WSVEAVVLFL…YYIDRLKQGK (68 aa).

It belongs to the SCM family. In terms of tissue distribution, highly expressed in testis and pancreas. Preferentially expressed in the germ stem cells of testis.

The protein localises to the nucleus. Functionally, putative Polycomb group (PcG) protein. PcG proteins act by forming multiprotein complexes, which are required to maintain the transcriptionally repressive state of homeotic genes throughout development. May be involved in spermatogenesis during sexual maturation. This chain is Sex comb on midleg-like protein 1 (SCML1), found in Macaca mulatta (Rhesus macaque).